A 332-amino-acid polypeptide reads, in one-letter code: Glycerol-3-phosphate dehydrogenase [NAD(P)+] 2 (332 aa).

The NADPH site is built by serine 17, tryptophan 18, arginine 37, and lysine 112. Positions 112 and 140 each coordinate sn-glycerol 3-phosphate. Alanine 144 is an NADPH binding site. Sn-glycerol 3-phosphate contacts are provided by lysine 195, aspartate 243, serine 253, arginine 254, and asparagine 255. Lysine 195 acts as the Proton acceptor in catalysis. Residue arginine 254 coordinates NADPH. NADPH contacts are provided by valine 278 and glutamate 280.

It belongs to the NAD-dependent glycerol-3-phosphate dehydrogenase family.

It is found in the cytoplasm. The enzyme catalyses sn-glycerol 3-phosphate + NAD(+) = dihydroxyacetone phosphate + NADH + H(+). The catalysed reaction is sn-glycerol 3-phosphate + NADP(+) = dihydroxyacetone phosphate + NADPH + H(+). It functions in the pathway membrane lipid metabolism; glycerophospholipid metabolism. Its function is as follows. Catalyzes the reduction of the glycolytic intermediate dihydroxyacetone phosphate (DHAP) to sn-glycerol 3-phosphate (G3P), the key precursor for phospholipid synthesis. The sequence is that of Glycerol-3-phosphate dehydrogenase [NAD(P)+] 2 from Mycolicibacterium paratuberculosis (strain ATCC BAA-968 / K-10) (Mycobacterium paratuberculosis).